The chain runs to 337 residues: Heat-inducible transcription repressor HrcA (337 aa).

It belongs to the HrcA family.

Its function is as follows. Negative regulator of class I heat shock genes (grpE-dnaK-dnaJ and groELS operons). Prevents heat-shock induction of these operons. This is Heat-inducible transcription repressor HrcA from Metamycoplasma arthritidis (strain 158L3-1) (Mycoplasma arthritidis).